The following is a 275-amino-acid chain: Cell division protein FtsQ (275 aa).

A disordered region spans residues methionine 1 to proline 20. At methionine 1–lysine 38 the chain is on the cytoplasmic side. Residues valine 39–alanine 61 form a helical membrane-spanning segment. Residues glycine 62–valine 275 are Periplasmic-facing. In terms of domain architecture, POTRA spans phenylalanine 66–arginine 134.

Belongs to the FtsQ/DivIB family. FtsQ subfamily.

It localises to the cell inner membrane. In terms of biological role, essential cell division protein. This Geotalea daltonii (strain DSM 22248 / JCM 15807 / FRC-32) (Geobacter daltonii) protein is Cell division protein FtsQ.